A 119-amino-acid chain; its full sequence is Histone H1B, sperm (119 aa).

One can recognise an H15 domain in the interval 8–77 (THPPVATAVV…QNKGSFRVNK (70 aa)). The segment at 76–119 (NKTALPKKKKAAKKPKAKKVKKPKSAAKKKTNRARAPKTKKNRN) is disordered. Positions 80 to 119 (LPKKKKAAKKPKAKKVKKPKSAAKKKTNRARAPKTKKNRN) are enriched in basic residues.

It belongs to the histone H1/H5 family.

The protein localises to the nucleus. It is found in the chromosome. In terms of biological role, histones H1 are necessary for the condensation of nucleosome chains into higher-order structures. This is Histone H1B, sperm from Platynereis dumerilii (Dumeril's clam worm).